The primary structure comprises 386 residues: Succinate--CoA ligase [ADP-forming] subunit beta (386 aa).

In terms of domain architecture, ATP-grasp spans 9 to 244; it reads KEILRKYGVP…HDEEDPLETR (236 aa). ATP contacts are provided by residues lysine 46, 53–55, glutamate 99, cysteine 102, and glutamate 107; that span reads GRG. Mg(2+) contacts are provided by asparagine 199 and aspartate 213. Residues asparagine 264 and 321-323 each bind substrate; that span reads GIM.

This sequence belongs to the succinate/malate CoA ligase beta subunit family. In terms of assembly, heterotetramer of two alpha and two beta subunits. The cofactor is Mg(2+).

It carries out the reaction succinate + ATP + CoA = succinyl-CoA + ADP + phosphate. The catalysed reaction is GTP + succinate + CoA = succinyl-CoA + GDP + phosphate. Its pathway is carbohydrate metabolism; tricarboxylic acid cycle; succinate from succinyl-CoA (ligase route): step 1/1. Its function is as follows. Succinyl-CoA synthetase functions in the citric acid cycle (TCA), coupling the hydrolysis of succinyl-CoA to the synthesis of either ATP or GTP and thus represents the only step of substrate-level phosphorylation in the TCA. The beta subunit provides nucleotide specificity of the enzyme and binds the substrate succinate, while the binding sites for coenzyme A and phosphate are found in the alpha subunit. The chain is Succinate--CoA ligase [ADP-forming] subunit beta from Rickettsia rickettsii (strain Iowa).